Here is a 347-residue protein sequence, read N- to C-terminus: Phenylalanine--tRNA ligase alpha subunit (347 aa).

Glutamate 268 is a binding site for Mg(2+).

It belongs to the class-II aminoacyl-tRNA synthetase family. Phe-tRNA synthetase alpha subunit type 1 subfamily. Tetramer of two alpha and two beta subunits. Mg(2+) is required as a cofactor.

The protein resides in the cytoplasm. The enzyme catalyses tRNA(Phe) + L-phenylalanine + ATP = L-phenylalanyl-tRNA(Phe) + AMP + diphosphate + H(+). This chain is Phenylalanine--tRNA ligase alpha subunit, found in Leptothrix cholodnii (strain ATCC 51168 / LMG 8142 / SP-6) (Leptothrix discophora (strain SP-6)).